A 581-amino-acid polypeptide reads, in one-letter code: Amino-acid acetyltransferase, mitochondrial (581 aa).

Positions 401–558 (FTLHNLIEDE…RIVGSEAVNI (158 aa)) constitute an N-acetyltransferase domain.

The protein belongs to the acetyltransferase family.

It localises to the mitochondrion. The catalysed reaction is L-glutamate + acetyl-CoA = N-acetyl-L-glutamate + CoA + H(+). Its pathway is amino-acid biosynthesis; L-arginine biosynthesis; N(2)-acetyl-L-ornithine from L-glutamate: step 1/4. N-acetylglutamate synthase involved in arginine biosynthesis. This Scheffersomyces stipitis (strain ATCC 58785 / CBS 6054 / NBRC 10063 / NRRL Y-11545) (Yeast) protein is Amino-acid acetyltransferase, mitochondrial (ARG2).